We begin with the raw amino-acid sequence, 231 residues long: Thymocyte nuclear protein 1 (231 aa).

Residues 1–54 (MPPRKTRSSAKSNKHSDADAHLNEGSDDVAQRKTGKRKRSAAVKGDVENKNDDD) form a disordered region. Positions 4 to 11 (RKTRSSAK) match the Nuclear localization signal motif. 2 stretches are compositionally biased toward basic and acidic residues: residues 14 to 24 (KHSDADAHLNE) and 45 to 54 (GDVENKNDDD).

In terms of processing, phosphorylated.

It localises to the nucleus. In terms of biological role, specifically binds 5-hydroxymethylcytosine (5hmC), suggesting that it acts as a specific reader of 5hmC. The chain is Thymocyte nuclear protein 1 (thyn1) from Danio rerio (Zebrafish).